A 212-amino-acid chain; its full sequence is Pyridoxine/pyridoxamine 5'-phosphate oxidase (212 aa).

Substrate-binding positions include 8–11 (RREY) and K66. FMN contacts are provided by residues 61–66 (RIVLLK), 76–77 (FT), R82, K83, and Q105. Substrate-binding residues include Y123, R127, and S131. FMN-binding positions include 140–141 (QS) and W185. 191 to 193 (RLH) is a substrate binding site. R195 contributes to the FMN binding site.

The protein belongs to the pyridoxamine 5'-phosphate oxidase family. Homodimer. Requires FMN as cofactor.

The catalysed reaction is pyridoxamine 5'-phosphate + O2 + H2O = pyridoxal 5'-phosphate + H2O2 + NH4(+). The enzyme catalyses pyridoxine 5'-phosphate + O2 = pyridoxal 5'-phosphate + H2O2. The protein operates within cofactor metabolism; pyridoxal 5'-phosphate salvage; pyridoxal 5'-phosphate from pyridoxamine 5'-phosphate: step 1/1. It participates in cofactor metabolism; pyridoxal 5'-phosphate salvage; pyridoxal 5'-phosphate from pyridoxine 5'-phosphate: step 1/1. Catalyzes the oxidation of either pyridoxine 5'-phosphate (PNP) or pyridoxamine 5'-phosphate (PMP) into pyridoxal 5'-phosphate (PLP). This is Pyridoxine/pyridoxamine 5'-phosphate oxidase from Shewanella denitrificans (strain OS217 / ATCC BAA-1090 / DSM 15013).